A 563-amino-acid polypeptide reads, in one-letter code: Membrane protein insertase YidC (563 aa).

The helical transmembrane segment at 6-26 (TILWMIFSFSLLLLWNNWQIH) threads the bilayer. Positions 36-68 (PPASSAASPAEGQQAAANGQAATPSVPTTPAAA) are disordered. The next 4 helical transmembrane spans lie at 373–393 (WGWAIVALTVIIKAVFFPLAA), 443–463 (LPMVVQIPVFIALYWVLLASV), 482–502 (PYFILPAVMMATMFLQIKLNP), and 512–532 (VMMIMPLVFGGMMFFFPAGLV).

Belongs to the OXA1/ALB3/YidC family. Type 1 subfamily. Interacts with the Sec translocase complex via SecD. Specifically interacts with transmembrane segments of nascent integral membrane proteins during membrane integration.

Its subcellular location is the cell inner membrane. Its function is as follows. Required for the insertion and/or proper folding and/or complex formation of integral membrane proteins into the membrane. Involved in integration of membrane proteins that insert both dependently and independently of the Sec translocase complex, as well as at least some lipoproteins. Aids folding of multispanning membrane proteins. This chain is Membrane protein insertase YidC, found in Bordetella petrii (strain ATCC BAA-461 / DSM 12804 / CCUG 43448).